We begin with the raw amino-acid sequence, 337 residues long: DNA-directed RNA polymerase subunit alpha (337 aa).

An alpha N-terminal domain (alpha-NTD) region spans residues 1–233 (MIQKNWQELI…DQLSIFVNFE (233 aa)). Residues 249 to 337 (FNPALLKKVD…DLAKRYEDQY (89 aa)) are alpha C-terminal domain (alpha-CTD).

It belongs to the RNA polymerase alpha chain family. In terms of assembly, homodimer. The RNAP catalytic core consists of 2 alpha, 1 beta, 1 beta' and 1 omega subunit. When a sigma factor is associated with the core the holoenzyme is formed, which can initiate transcription.

The enzyme catalyses RNA(n) + a ribonucleoside 5'-triphosphate = RNA(n+1) + diphosphate. Functionally, DNA-dependent RNA polymerase catalyzes the transcription of DNA into RNA using the four ribonucleoside triphosphates as substrates. This is DNA-directed RNA polymerase subunit alpha from Brucella melitensis biotype 2 (strain ATCC 23457).